Here is a 578-residue protein sequence, read N- to C-terminus: MSSESRENEVKAETKDEIANDGSPQLNGDNNIQSSDGHNDENEESLSRKRDSSGATVGDLKQEEKESMPKKEPEPTVKKIRGSGMPPPQQKYCLAIVRQLKRTKNSAPFKVPVDPIKQNIPDYPTIVKNPMDLGTIEKKLTSYEYSVPQEFIDDMNLMFSNCFLYNGTESPVGSMGKALQEVFERQLKQLPDAEQPAAAPVKKSKQKSASTAPPRTRRNSSVSSTSASVAASTAPKAASPAVLPEGKPRRRKNNSQMRFCSTVLKELYKRQYESFAFPFYQPVDPVACDCPDYFDVIKEPMDLSTIQSKLNKNEYSTLEEFESDILLMFNNCFTYNPPGTPVHVMGRQLENVFKEKWEARPKFDDATLVKQQEAETDALFDNGEEEEALMSEEEINGAKFAAVDKQISMLQDTLEAMKAKKMNRMRKPRRRDLTKEYGPITYAMQNELAERCNYLSAEQLSNVAEILREEMPWLRDTDEIEIDVGNMKPEVFHRIYRYVCKPDADSSEPASPVLMPTKPEKKKGRVLSETEQAEKIRRLQQQLDRFAGKTSPTSPESNNAANVSDSESDNESESSESA.

Residues 1 to 18 (MSSESRENEVKAETKDEI) show a composition bias toward basic and acidic residues. 3 disordered regions span residues 1 to 89 (MSSE…PPPQ), 192 to 254 (DAEQ…RKNN), and 504 to 578 (ADSS…SESA). The segment covering 22–36 (GSPQLNGDNNIQSSD) has biased composition (polar residues). Composition is skewed to basic and acidic residues over residues 37 to 52 (GHNDENEESLSRKRDS) and 60 to 77 (LKQEEKESMPKKEPEPTV). Positions 84-190 (GMPPPQQKYC…EVFERQLKQL (107 aa)) constitute a Bromo 1 domain. A compositionally biased stretch (low complexity) spans 219-242 (NSSVSSTSASVAASTAPKAASPAV). 3 positions are modified to phosphoserine: Ser221, Ser223, and Ser224. Thr225 is subject to Phosphothreonine. Phosphoserine is present on residues Ser226 and Ser239. A Bromo 2 domain is found at 251–360 (RKNNSQMRFC…NVFKEKWEAR (110 aa)). The region spanning 430 to 510 (RRDLTKEYGP…KPDADSSEPA (81 aa)) is the NET domain. Ser511 bears the Phosphoserine mark. Basic and acidic residues predominate over residues 526 to 537 (VLSETEQAEKIR). A compositionally biased stretch (polar residues) spans 550-563 (TSPTSPESNNAANV). Positions 566-578 (SESDNESESSESA) are enriched in acidic residues.

This sequence belongs to the BET family. In terms of assembly, component of the SWR1 chromatin-remodeling complex.

Its subcellular location is the nucleus. Component of the SWR1 complex which mediates the ATP-dependent exchange of histone H2A for the H2A variant HZT1 leading to transcriptional regulation of selected genes by chromatin remodeling. This Schizosaccharomyces pombe (strain 972 / ATCC 24843) (Fission yeast) protein is SWR1 complex bromodomain subunit bdf1 (bdf1).